Reading from the N-terminus, the 345-residue chain is N-glycosylase/DNA lyase (345 aa).

The DNA site is built by N149, R154, and R204. Catalysis depends on K249, which acts as the Schiff-base intermediate with DNA. 8-oxoguanine contacts are provided by P266 and D268. H270 and Q287 together coordinate DNA. 8-oxoguanine is bound by residues Q315 and F319.

The protein belongs to the type-1 OGG1 family. As to expression, highest expression in testis.

It localises to the nucleus. It is found in the nucleoplasm. The protein localises to the nucleus speckle. Its subcellular location is the nucleus matrix. It carries out the reaction 2'-deoxyribonucleotide-(2'-deoxyribose 5'-phosphate)-2'-deoxyribonucleotide-DNA = a 3'-end 2'-deoxyribonucleotide-(2,3-dehydro-2,3-deoxyribose 5'-phosphate)-DNA + a 5'-end 5'-phospho-2'-deoxyribonucleoside-DNA + H(+). Functionally, DNA repair enzyme that incises DNA at 8-oxoG residues. Excises 7,8-dihydro-8-oxoguanine and 2,6-diamino-4-hydroxy-5-N-methylformamidopyrimidine (FAPY) from damaged DNA. Has a beta-lyase activity that nicks DNA 3' to the lesion. The chain is N-glycosylase/DNA lyase (Ogg1) from Mus musculus (Mouse).